The sequence spans 242 residues: Phosphoribosylaminoimidazole-succinocarboxamide synthase (242 aa).

Belongs to the SAICAR synthetase family.

It carries out the reaction 5-amino-1-(5-phospho-D-ribosyl)imidazole-4-carboxylate + L-aspartate + ATP = (2S)-2-[5-amino-1-(5-phospho-beta-D-ribosyl)imidazole-4-carboxamido]succinate + ADP + phosphate + 2 H(+). It functions in the pathway purine metabolism; IMP biosynthesis via de novo pathway; 5-amino-1-(5-phospho-D-ribosyl)imidazole-4-carboxamide from 5-amino-1-(5-phospho-D-ribosyl)imidazole-4-carboxylate: step 1/2. This chain is Phosphoribosylaminoimidazole-succinocarboxamide synthase, found in Pediococcus pentosaceus (strain ATCC 25745 / CCUG 21536 / LMG 10740 / 183-1w).